The primary structure comprises 198 residues: NAD(P)H dehydrogenase (quinone) (198 aa).

A Flavodoxin-like domain is found at 4–189; it reads ILVLYYSMYG…SIARYQGEYV (186 aa). Residues 10-15 and 78-80 each bind FMN; these read SMYGHI and TRF. Residue Tyr12 participates in NAD(+) binding. Trp98 lines the substrate pocket. FMN contacts are provided by residues 113 to 118 and His133; that span reads STGTGG.

The protein belongs to the WrbA family. It depends on FMN as a cofactor.

The enzyme catalyses a quinone + NADH + H(+) = a quinol + NAD(+). It carries out the reaction a quinone + NADPH + H(+) = a quinol + NADP(+). The protein is NAD(P)H dehydrogenase (quinone) of Salmonella paratyphi A (strain ATCC 9150 / SARB42).